A 79-amino-acid chain; its full sequence is Conotoxin Kt6.1 (79 aa).

An N-terminal signal peptide occupies residues M1–A22. A propeptide spanning residues V23 to R47 is cleaved from the precursor. 3 disulfide bridges follow: C49-C62, C56-C67, and C61-C77. 2 positions are modified to 4-hydroxyproline: P60 and P63.

This sequence belongs to the conotoxin O1 superfamily. As to expression, expressed by the venom duct.

It is found in the secreted. Its function is as follows. Ion channel inhibitor that inhibits the increase in intracellular calcium upon depolarization in DRG neurons. In vivo, both intraperitoneal and intracranial injections into mice induce hyperactivity. This Conus kintoki (Cone snail) protein is Conotoxin Kt6.1.